The sequence spans 332 residues: Holliday junction branch migration complex subunit RuvB (332 aa).

A large ATPase domain (RuvB-L) region spans residues 1 to 181 (MARILDNDVM…FGITGHMEYY (181 aa)). ATP-binding positions include Leu20, Arg21, Gly62, Lys65, Thr66, Thr67, 128–130 (EDF), Arg171, Tyr181, and Arg218. Residue Thr66 coordinates Mg(2+). Positions 182 to 252 (QEKDLTEIVE…ITDRALTMLD (71 aa)) are small ATPAse domain (RuvB-S). The interval 255-332 (REGLDYIDQK…RHLGYPYQNT (78 aa)) is head domain (RuvB-H). DNA-binding residues include Arg291, Arg310, Arg312, and Arg315.

This sequence belongs to the RuvB family. In terms of assembly, homohexamer. Forms an RuvA(8)-RuvB(12)-Holliday junction (HJ) complex. HJ DNA is sandwiched between 2 RuvA tetramers; dsDNA enters through RuvA and exits via RuvB. An RuvB hexamer assembles on each DNA strand where it exits the tetramer. Each RuvB hexamer is contacted by two RuvA subunits (via domain III) on 2 adjacent RuvB subunits; this complex drives branch migration. In the full resolvosome a probable DNA-RuvA(4)-RuvB(12)-RuvC(2) complex forms which resolves the HJ.

The protein resides in the cytoplasm. The catalysed reaction is ATP + H2O = ADP + phosphate + H(+). In terms of biological role, the RuvA-RuvB-RuvC complex processes Holliday junction (HJ) DNA during genetic recombination and DNA repair, while the RuvA-RuvB complex plays an important role in the rescue of blocked DNA replication forks via replication fork reversal (RFR). RuvA specifically binds to HJ cruciform DNA, conferring on it an open structure. The RuvB hexamer acts as an ATP-dependent pump, pulling dsDNA into and through the RuvAB complex. RuvB forms 2 homohexamers on either side of HJ DNA bound by 1 or 2 RuvA tetramers; 4 subunits per hexamer contact DNA at a time. Coordinated motions by a converter formed by DNA-disengaged RuvB subunits stimulates ATP hydrolysis and nucleotide exchange. Immobilization of the converter enables RuvB to convert the ATP-contained energy into a lever motion, pulling 2 nucleotides of DNA out of the RuvA tetramer per ATP hydrolyzed, thus driving DNA branch migration. The RuvB motors rotate together with the DNA substrate, which together with the progressing nucleotide cycle form the mechanistic basis for DNA recombination by continuous HJ branch migration. Branch migration allows RuvC to scan DNA until it finds its consensus sequence, where it cleaves and resolves cruciform DNA. In Streptococcus pyogenes serotype M12 (strain MGAS9429), this protein is Holliday junction branch migration complex subunit RuvB.